The following is a 227-amino-acid chain: ATP-dependent dethiobiotin synthetase BioD (227 aa).

13–18 (NIGKTI) is an ATP binding site. Residue threonine 17 participates in Mg(2+) binding. The active site involves lysine 38. Serine 42 is a binding site for substrate. Residues aspartate 55, 117–120 (EGFG), 177–178 (NH), 206–208 (PFI), and asparagine 213 contribute to the ATP site. Mg(2+)-binding residues include aspartate 55 and glutamate 117.

The protein belongs to the dethiobiotin synthetase family. In terms of assembly, homodimer. Requires Mg(2+) as cofactor.

The protein localises to the cytoplasm. The enzyme catalyses (7R,8S)-7,8-diammoniononanoate + CO2 + ATP = (4R,5S)-dethiobiotin + ADP + phosphate + 3 H(+). It participates in cofactor biosynthesis; biotin biosynthesis; biotin from 7,8-diaminononanoate: step 1/2. Functionally, catalyzes a mechanistically unusual reaction, the ATP-dependent insertion of CO2 between the N7 and N8 nitrogen atoms of 7,8-diaminopelargonic acid (DAPA, also called 7,8-diammoniononanoate) to form a ureido ring. This chain is ATP-dependent dethiobiotin synthetase BioD, found in Wigglesworthia glossinidia brevipalpis.